We begin with the raw amino-acid sequence, 121 residues long: Small ribosomal subunit protein eS24 (121 aa).

Belongs to the eukaryotic ribosomal protein eS24 family.

The protein is Small ribosomal subunit protein eS24 of Pyrobaculum arsenaticum (strain DSM 13514 / JCM 11321 / PZ6).